The primary structure comprises 314 residues: tRNA pseudouridine synthase B (314 aa).

Residue His-43 participates in substrate binding. The active-site Nucleophile is the Asp-48. Substrate-binding residues include Tyr-76, Tyr-179, and Leu-200.

Belongs to the pseudouridine synthase TruB family. Type 1 subfamily.

It catalyses the reaction uridine(55) in tRNA = pseudouridine(55) in tRNA. Its function is as follows. Responsible for synthesis of pseudouridine from uracil-55 in the psi GC loop of transfer RNAs. The sequence is that of tRNA pseudouridine synthase B from Enterobacter sp. (strain 638).